We begin with the raw amino-acid sequence, 556 residues long: CBS domain-containing protein CBSCBSPB3 (556 aa).

2 stretches are compositionally biased toward polar residues: residues M1–V20 and P30–K44. The disordered stretch occupies residues M1–T63. The residue at position 2 (S2) is an N-acetylserine. CBS domains lie at R68–Q127, M134–K189, I235–E294, and M302–S360. One can recognise a PB1 domain in the interval G414–T502. The helical transmembrane segment at W527–V549 threads the bilayer.

The protein localises to the membrane. This chain is CBS domain-containing protein CBSCBSPB3 (CBSCBSPB3), found in Arabidopsis thaliana (Mouse-ear cress).